The following is a 165-amino-acid chain: Trypsin alpha-3 (165 aa).

The Peptidase S1 domain occupies Asn-1–Asn-163. The active-site Charge relay system is Asp-26. Intrachain disulfides connect Cys-89-Cys-106 and Cys-115-Cys-139. Ser-119 functions as the Charge relay system in the catalytic mechanism.

It belongs to the peptidase S1 family.

The protein resides in the secreted. The protein localises to the extracellular space. The enzyme catalyses Preferential cleavage: Arg-|-Xaa, Lys-|-Xaa.. This chain is Trypsin alpha-3, found in Lucilia cuprina (Green bottle fly).